The primary structure comprises 383 residues: 1-deoxy-D-xylulose 5-phosphate reductoisomerase (383 aa).

6 residues coordinate NADPH: Thr-10, Gly-11, Ser-12, Ile-13, Asn-38, and Asn-121. Lys-122 contacts 1-deoxy-D-xylulose 5-phosphate. Residue Glu-123 participates in NADPH binding. Mn(2+) is bound at residue Asp-147. 1-deoxy-D-xylulose 5-phosphate is bound by residues Ser-148, Glu-149, Ser-172, and His-195. Glu-149 lines the Mn(2+) pocket. Gly-201 serves as a coordination point for NADPH. 1-deoxy-D-xylulose 5-phosphate-binding residues include Ser-208, Asn-213, Lys-214, and Glu-217. Residue Glu-217 coordinates Mn(2+).

The protein belongs to the DXR family. It depends on Mg(2+) as a cofactor. Mn(2+) is required as a cofactor.

The enzyme catalyses 2-C-methyl-D-erythritol 4-phosphate + NADP(+) = 1-deoxy-D-xylulose 5-phosphate + NADPH + H(+). It participates in isoprenoid biosynthesis; isopentenyl diphosphate biosynthesis via DXP pathway; isopentenyl diphosphate from 1-deoxy-D-xylulose 5-phosphate: step 1/6. Its function is as follows. Catalyzes the NADPH-dependent rearrangement and reduction of 1-deoxy-D-xylulose-5-phosphate (DXP) to 2-C-methyl-D-erythritol 4-phosphate (MEP). The protein is 1-deoxy-D-xylulose 5-phosphate reductoisomerase of Ruthia magnifica subsp. Calyptogena magnifica.